We begin with the raw amino-acid sequence, 310 residues long: Protein translocase subunit SecF (310 aa).

6 helical membrane passes run 18–38 (FFTI…YRGG), 135–155 (QAVY…AFRF), 162–182 (IVSV…VILA), 188–208 (ITIV…TIVL), 240–260 (IVTS…GGEV), and 267–287 (IMII…APLI).

Belongs to the SecD/SecF family. SecF subfamily. As to quaternary structure, forms a complex with SecD. Part of the essential Sec protein translocation apparatus which comprises SecA, SecYEG and auxiliary proteins SecDF. Other proteins may also be involved.

The protein localises to the cell inner membrane. Its function is as follows. Part of the Sec protein translocase complex. Interacts with the SecYEG preprotein conducting channel. SecDF uses the proton motive force (PMF) to complete protein translocation after the ATP-dependent function of SecA. The chain is Protein translocase subunit SecF from Endomicrobium trichonymphae.